Here is a 381-residue protein sequence, read N- to C-terminus: Dual specificity protein phosphatase 6 (381 aa).

A Rhodanese domain is found at 30 to 148 (GNERLLLMDC…FQAEFSLHCE (119 aa)). The segment at 176-203 (SSSDIESDLDRDPNSATDSDGSPLSNSQ) is disordered. Over residues 189 to 203 (NSATDSDGSPLSNSQ) the composition is skewed to polar residues. Residues 206-349 (FPVEILPFLY…LLDFERTLGL (144 aa)) enclose the Tyrosine-protein phosphatase domain. Cysteine 293 acts as the Phosphocysteine intermediate in catalysis.

The protein belongs to the protein-tyrosine phosphatase family. Non-receptor class dual specificity subfamily. As to quaternary structure, interacts with MAPK1/ERK2. Ubiquitinated by the SCF(FBXO31) complex, leading to its proteasomal degradation. In terms of tissue distribution, expressed in keratinocytes (at protein level).

It is found in the cytoplasm. It catalyses the reaction O-phospho-L-tyrosyl-[protein] + H2O = L-tyrosyl-[protein] + phosphate. The catalysed reaction is O-phospho-L-seryl-[protein] + H2O = L-seryl-[protein] + phosphate. It carries out the reaction O-phospho-L-threonyl-[protein] + H2O = L-threonyl-[protein] + phosphate. In terms of biological role, dual specificity protein phosphatase, which mediates dephosphorylation and inactivation of MAP kinases. Has a specificity for the ERK family. Plays an important role in alleviating chronic postoperative pain. Necessary for the normal dephosphorylation of the long-lasting phosphorylated forms of spinal MAPK1/3 and MAP kinase p38 induced by peripheral surgery, which drives the resolution of acute postoperative allodynia. Also important for dephosphorylation of MAPK1/3 in local wound tissue, which further contributes to resolution of acute pain. Promotes cell differentiation by regulating MAPK1/MAPK3 activity and regulating the expression of AP1 transcription factors. The chain is Dual specificity protein phosphatase 6 (DUSP6) from Homo sapiens (Human).